A 130-amino-acid polypeptide reads, in one-letter code: Large ribosomal subunit protein bL19 (130 aa).

The protein belongs to the bacterial ribosomal protein bL19 family.

Its function is as follows. This protein is located at the 30S-50S ribosomal subunit interface and may play a role in the structure and function of the aminoacyl-tRNA binding site. In Cupriavidus taiwanensis (strain DSM 17343 / BCRC 17206 / CCUG 44338 / CIP 107171 / LMG 19424 / R1) (Ralstonia taiwanensis (strain LMG 19424)), this protein is Large ribosomal subunit protein bL19.